A 115-amino-acid chain; its full sequence is Large ribosomal subunit protein uL24 (115 aa).

It belongs to the universal ribosomal protein uL24 family. In terms of assembly, part of the 50S ribosomal subunit.

Functionally, one of two assembly initiator proteins, it binds directly to the 5'-end of the 23S rRNA, where it nucleates assembly of the 50S subunit. One of the proteins that surrounds the polypeptide exit tunnel on the outside of the subunit. The sequence is that of Large ribosomal subunit protein uL24 from Deinococcus geothermalis (strain DSM 11300 / CIP 105573 / AG-3a).